Here is a 258-residue protein sequence, read N- to C-terminus: Regulatory protein RecX (258 aa).

The protein belongs to the RecX family.

The protein localises to the cytoplasm. Functionally, modulates RecA activity. The sequence is that of Regulatory protein RecX from Streptococcus pyogenes serotype M12 (strain MGAS2096).